Consider the following 100-residue polypeptide: Testis development-related protein 1 (100 aa).

The disordered stretch occupies residues 73–100 (GLGSLGGQDSSGSLVQRASCELESPYEL).

In terms of tissue distribution, expressed in the testis but not in any other non-reproductive tissues (at protein level). Mainly located in spermatogenic cells in seminiferous tubules of adult testis.

The protein resides in the cytoplasm. This Homo sapiens (Human) protein is Testis development-related protein 1 (TDRG1).